The primary structure comprises 916 residues: DNA ligase 1 (916 aa).

Polar residues predominate over residues 1-10 (MQRSIMSFFQ). Residues 1-197 (MQRSIMSFFQ…SPESVTLTKT (197 aa)) are disordered. Basic and acidic residues predominate over residues 13–43 (KEGKAKKPEKETPSSIREKEPPPKVALKERN). 3 positions are modified to phosphoserine: Ser49, Ser51, and Ser65. Thr77 carries the phosphothreonine modification. Residues 99–111 (PENSPVFNCSSPM) show a composition bias toward polar residues. A compositionally biased stretch (basic residues) spans 119–129 (PKRRTARKQLP). Position 144 is an N6-acetyllysine (Lys144). Residues 153 to 177 (KEEETPKESLAEAEDIKQKEEKEGD) show a composition bias toward basic and acidic residues. Polar residues predominate over residues 185 to 197 (PTKSPESVTLTKT). Thr193 is modified (phosphothreonine). Lys225 is modified (N6-acetyllysine). A phosphoserine mark is found at Ser228 and Ser229. The residue at position 232 (Thr232) is a Phosphothreonine. Residues 236–266 (PAVKTEVKQEESGTLRKEETKGTLDPANYNP) form a disordered region. The span at 238–257 (VKTEVKQEESGTLRKEETKG) shows a compositional bias: basic and acidic residues. Residues 447–456 (RLRLGLAEQS) are interaction with target DNA. Glu564 provides a ligand contact to ATP. Residue Lys566 is the N6-AMP-lysine intermediate of the active site. Residues Arg571 and Glu619 each contribute to the ATP site. Glu619 lines the Mg(2+) pocket. The segment at 640–642 (KRK) is interaction with target DNA. Glu718 serves as a coordination point for Mg(2+). Residues Lys723 and Lys742 each coordinate ATP. Thr796 is modified (phosphothreonine). A phosphoserine mark is found at Ser799, Ser906, Ser907, and Ser911. Positions 879-916 (DKQPEQATTSNQVASLYRKQSQIQNQQSSDLDSDVEDY) are disordered. Positions 883 to 908 (EQATTSNQVASLYRKQSQIQNQQSSD) are enriched in polar residues.

Belongs to the ATP-dependent DNA ligase family. Interacts with PCNA. Interacts with POLB. Requires Mg(2+) as cofactor.

Its subcellular location is the nucleus. The catalysed reaction is ATP + (deoxyribonucleotide)n-3'-hydroxyl + 5'-phospho-(deoxyribonucleotide)m = (deoxyribonucleotide)n+m + AMP + diphosphate.. Functionally, DNA ligase that seals nicks in double-stranded during DNA repair. Also involved in DNA replication and DNA recombination. This chain is DNA ligase 1 (Lig1), found in Mus musculus (Mouse).